The chain runs to 298 residues: Protoheme IX farnesyltransferase (298 aa).

Helical transmembrane passes span 29 to 49, 51 to 71, 97 to 117, 120 to 140, 148 to 168, 175 to 195, 221 to 241, 243 to 263, and 278 to 298; these read LIVF…PPLL, FGVA…LNCL, ETVT…HGFI, LTMW…TLIL, IVIG…AMTG, LVLF…LACY, ILWY…LGMS, GFYL…AIAL, and YSIL…LIVL.

It belongs to the UbiA prenyltransferase family. Protoheme IX farnesyltransferase subfamily.

The protein resides in the cell inner membrane. It carries out the reaction heme b + (2E,6E)-farnesyl diphosphate + H2O = Fe(II)-heme o + diphosphate. It functions in the pathway porphyrin-containing compound metabolism; heme O biosynthesis; heme O from protoheme: step 1/1. In terms of biological role, converts heme B (protoheme IX) to heme O by substitution of the vinyl group on carbon 2 of heme B porphyrin ring with a hydroxyethyl farnesyl side group. In Dechloromonas aromatica (strain RCB), this protein is Protoheme IX farnesyltransferase.